Consider the following 451-residue polypeptide: MEAGPPGSARPAEPGPCLSGQRGADHTASASLQSVAGTEPGRHPQAVAAVLPAGGCGERMGVPTPKQFCPILERPLISYTLQALERVCWIKDIVVAVTGENMEVMKSIIQKYQHKRISLVEAGVTRHRSIFNGLKALAEDQINSKLSKPEVVIIHDAVRPFVEEGVLLKVVTAAKEHGAAGAIRPLVSTVVSPSADGCLDYSLERARHRASEMPQAFLFDVIYEAYQQCSDYDLEFGTECLQLALKYCCTKAKLVEGSPDLWKVTYKRDLYAAESIIKERISQEICVVMDTEEDNKHVGHLLEEVLKSELNHVKVTSEALGHAGRHLQQIILDQCYNFVCVNVTTSDFQETQKLLSMLEESSLCILYPVVVVSVHFLDFKLVPPSQKMENLMQIREFAKEVKERNILLYGLLISYPQDDQKLQESLRQGAIIIASLIKERNSGLIGQLLIA.

The interval 1–29 (MEAGPPGSARPAEPGPCLSGQRGADHTAS) is disordered.

This sequence belongs to the IspD/TarI cytidylyltransferase family. IspD subfamily. In terms of assembly, homodimer. Ubiquitously expressed, with high expression in brain.

The protein localises to the cytoplasm. Its subcellular location is the cytosol. The enzyme catalyses D-ribitol 5-phosphate + CTP + H(+) = CDP-L-ribitol + diphosphate. It carries out the reaction D-ribose 5-phosphate + CTP + H(+) = CDP-D-ribose + diphosphate. The catalysed reaction is D-ribulose 5-phosphate + CTP + H(+) = CDP-D-ribulose + diphosphate. It participates in protein modification; protein glycosylation. In terms of biological role, cytidylyltransferase required for protein O-linked mannosylation. Catalyzes the formation of CDP-ribitol nucleotide sugar from D-ribitol 5-phosphate. CDP-ribitol is a substrate of FKTN during the biosynthesis of the phosphorylated O-mannosyl trisaccharide (N-acetylgalactosamine-beta-3-N-acetylglucosamine-beta-4-(phosphate-6-)mannose), a carbohydrate structure present in alpha-dystroglycan (DAG1), which is required for binding laminin G-like domain-containing extracellular proteins with high affinity. Shows activity toward other pentose phosphate sugars and mediates formation of CDP-ribulose or CDP-ribose using CTP and ribulose-5-phosphate or ribose-5-phosphate, respectively. Not Involved in dolichol production. In Homo sapiens (Human), this protein is D-ribitol-5-phosphate cytidylyltransferase.